The primary structure comprises 574 residues: Ankyrin repeat protein B19 (574 aa).

ANK repeat units follow at residues 56-87 (TGYT…DVTM), 135-164 (IKSR…DPNF), 167-213 (DGYT…NLNA), 217-249 (CGNT…NFEI), 253-285 (HGLT…NVGE), and 327-356 (EGKT…DINA). Residues 541–574 (NCLLTLLPSEIIYEILYMLTINDLYNISYPPTKV) enclose the F-box domain.

Belongs to the poxvirinae B18 protein family.

In Vaccinia virus (strain Western Reserve) (VACV), this protein is Ankyrin repeat protein B19.